A 457-amino-acid chain; its full sequence is C4-dicarboxylate transport protein (457 aa).

Transmembrane regions (helical) follow at residues 22–42 (FQVVVAIILGALLGRFEPAFA), 55–75 (LVKMIIAPVIFLTIVTGIAGM), 90–110 (VYFLFFSTLALVVGLVVAHVV), 138–158 (LTLVGFLMDIIPNSLIGAFTG), 168–188 (GPNILQVLFVAVLFGVSLALV), 209–229 (LVHILMRAAPIGAFGAIAFTI), 242–262 (WLVGSFYLTSLLFVLVILGVV), 335–357 (LFIAQATNTELTLGHQIALLAVA), and 376–396 (AATLAVVPEVPVAGMALILGV).

Belongs to the dicarboxylate/amino acid:cation symporter (DAACS) (TC 2.A.23) family.

The protein resides in the cell inner membrane. In terms of biological role, responsible for the transport of dicarboxylates such as succinate, fumarate, and malate from the periplasm across the membrane. This Xanthomonas oryzae pv. oryzae (strain MAFF 311018) protein is C4-dicarboxylate transport protein.